Reading from the N-terminus, the 1089-residue chain is Probable transport protein MmpL8 (1089 aa).

Residues 1-26 (MCDVLMQPVRTPRPSTNLRSKPLRPT) form a disordered region. 12 consecutive transmembrane segments (helical) span residues 44–64 (WVVI…VPSL), 222–242 (ITIL…TMVL), 257–277 (LVAI…IFMS), 316–336 (IGKV…GMVF), 349–369 (LGIS…ALMV), 400–420 (KTHL…AGLA), 555–575 (AIST…LLGG), 874–894 (IIAM…RAIV), 898–918 (YLIG…VIVF), 930–950 (IPGL…MLLI), 973–993 (GGVI…LVFA), and 996–1016 (GSVV…TFLV). The disordered stretch occupies residues 1056–1078 (RTKRKPLLPKEEEEQSPPDDDDL). Over residues 1066 to 1078 (EEEEQSPPDDDDL) the composition is skewed to acidic residues.

Belongs to the resistance-nodulation-cell division (RND) (TC 2.A.6) family. MmpL subfamily.

It localises to the cell membrane. The polypeptide is Probable transport protein MmpL8 (mmpL8) (Mycobacterium tuberculosis (strain ATCC 25177 / H37Ra)).